The sequence spans 203 residues: 2-hydroxychromene-2-carboxylate isomerase (203 aa).

Residue serine 11 is the Nucleophile of the active site. Position 11 (serine 11) interacts with glutathione. Residues lysine 43, 53–54 (NR), and tyrosine 84 contribute to the substrate site. Residues valine 168 and 179–182 (WGND) each bind glutathione.

The protein belongs to the GST superfamily. NadH family. It depends on glutathione as a cofactor.

It carries out the reaction 2-hydroxychromene-2-carboxylate = (3E)-4-(2-hydroxyphenyl)-2-oxobut-3-enoate. The protein operates within aromatic compound metabolism; naphthalene degradation. Its function is as follows. Involved in the naphthalene catabolic pathway. Catalyzes the reversible glutathione-dependent isomerization of 2-hydroxychromene-2-carboxylate (HCCA) to trans-O-hydroxybenzylidenepyruvate (THBPA). The protein is 2-hydroxychromene-2-carboxylate isomerase (nahD) of Pseudomonas putida (Arthrobacter siderocapsulatus).